Consider the following 620-residue polypeptide: Dopamine beta-hydroxylase (620 aa).

Topologically, residues 1 to 19 are cytoplasmic; that stretch reads MQPHLSHQPCWSLPSPSVR. The chain crosses the membrane as a helical; Signal-anchor for type II membrane protein span at residues 20 to 40; the sequence is EAASMYGTAVAIFLVILVAAL. The Intragranular segment spans residues 41–620; sequence QGSEPPESPF…FVVITHGGRH (580 aa). The 117-residue stretch at 60 to 176 folds into the DOMON domain; that stretch reads GTLELSWNVS…DTVHLVYGIL (117 aa). Residues Asn67 and Asn187 are each glycosylated (N-linked (GlcNAc...) asparagine). Cystine bridges form between Cys157–Cys599, Cys235–Cys286, Cys272–Cys298, Cys393–Cys506, Cys397–Cys568, and Cys469–Cys491. The active site involves Tyr233. Cu(2+)-binding residues include His265 and His266. An N-linked (GlcNAc...) asparagine glycan is attached at Asn274. His336 lines the Cu(2+) pocket. Position 349 is a phosphoserine; by CaMK (Ser349). His415 is a catalytic residue. Cu(2+) is bound by residues His415 and His417. N-linked (GlcNAc...) asparagine glycosylation occurs at Asn475. Cu(2+) is bound at residue Met490. Residues Asn569 and Asn587 are each glycosylated (N-linked (GlcNAc...) asparagine).

This sequence belongs to the copper type II ascorbate-dependent monooxygenase family. Homotetramer; composed of two disulfide-linked dimers. Requires Cu(2+) as cofactor. In terms of processing, proteolytic cleavage after the membrane-anchor leads to the release of the soluble form. N-glycosylated. In terms of tissue distribution, chromaffin granules of the adrenal medulla and synaptic vesicles of the sympathetic nervous system.

The protein resides in the cytoplasmic vesicle. The protein localises to the secretory vesicle lumen. It is found in the secretory vesicle. It localises to the chromaffin granule lumen. Its subcellular location is the secreted. The protein resides in the secretory vesicle membrane. The protein localises to the chromaffin granule membrane. It carries out the reaction dopamine + 2 L-ascorbate + O2 = (R)-noradrenaline + 2 monodehydro-L-ascorbate radical + H2O. The protein operates within catecholamine biosynthesis; (R)-noradrenaline biosynthesis; (R)-noradrenaline from dopamine: step 1/1. In terms of biological role, catalyzes the hydroxylation of dopamine to noradrenaline (also known as norepinephrine), and is thus vital for regulation of these neurotransmitters. The sequence is that of Dopamine beta-hydroxylase (Dbh) from Rattus norvegicus (Rat).